The primary structure comprises 843 residues: Protein P (843 aa).

The segment at 1–177 (MPLSYPHFRK…FCGSPYSWEQ (177 aa)) is terminal protein domain (TP). A spacer region spans residues 178–346 (ELQHGSTSIN…YCLSHIINLL (169 aa)). 2 disordered regions span residues 180–221 (QHGS…FQQS) and 282–313 (REKT…GSVR). Residues 196-221 (SLCTQSSGILSRPSAGSSIQGKFQQS) are compositionally biased toward polar residues. Positions 347–690 (EDWGPCYEHG…YMHLYPVARQ (344 aa)) are polymerase/reverse transcriptase domain (RT). The 244-residue stretch at 357–600 (QHHIRTPRTP…YTLNFMGYVI (244 aa)) folds into the Reverse transcriptase domain. Mg(2+) is bound by residues Asp429, Asp551, and Asp552.

It belongs to the hepadnaviridae P protein family.

The catalysed reaction is DNA(n) + a 2'-deoxyribonucleoside 5'-triphosphate = DNA(n+1) + diphosphate. The enzyme catalyses Endonucleolytic cleavage to 5'-phosphomonoester.. Its activity is regulated as follows. Activated by host HSP70 and HSP40 in vitro to be able to bind the epsilon loop of the pgRNA. Because deletion of the RNase H region renders the protein partly chaperone-independent, the chaperones may be needed indirectly to relieve occlusion of the RNA-binding site by this domain. Inhibited by several reverse-transcriptase inhibitors: Lamivudine, Adefovir and Entecavir. In terms of biological role, multifunctional enzyme that converts the viral RNA genome into dsDNA in viral cytoplasmic capsids. This enzyme displays a DNA polymerase activity that can copy either DNA or RNA templates, and a ribonuclease H (RNase H) activity that cleaves the RNA strand of RNA-DNA heteroduplexes in a partially processive 3'- to 5'-endonucleasic mode. Neo-synthesized pregenomic RNA (pgRNA) are encapsidated together with the P protein, and reverse-transcribed inside the nucleocapsid. Initiation of reverse-transcription occurs first by binding the epsilon loop on the pgRNA genome, and is initiated by protein priming, thereby the 5'-end of (-)DNA is covalently linked to P protein. Partial (+)DNA is synthesized from the (-)DNA template and generates the relaxed circular DNA (RC-DNA) genome. After budding and infection, the RC-DNA migrates in the nucleus, and is converted into a plasmid-like covalently closed circular DNA (cccDNA). The activity of P protein does not seem to be necessary for cccDNA generation, and is presumably released from (+)DNA by host nuclear DNA repair machinery. The chain is Protein P from Homo sapiens (Human).